The chain runs to 276 residues: Urease accessory protein UreD (276 aa).

The protein belongs to the UreD family. In terms of assembly, ureD, UreF and UreG form a complex that acts as a GTP-hydrolysis-dependent molecular chaperone, activating the urease apoprotein by helping to assemble the nickel containing metallocenter of UreC. The UreE protein probably delivers the nickel.

It localises to the cytoplasm. Required for maturation of urease via the functional incorporation of the urease nickel metallocenter. The polypeptide is Urease accessory protein UreD (Albidiferax ferrireducens (strain ATCC BAA-621 / DSM 15236 / T118) (Rhodoferax ferrireducens)).